The sequence spans 853 residues: Translation initiation factor IF-2 (853 aa).

2 disordered regions span residues M1–G68 and L94–S265. Positions R20–H32 are enriched in polar residues. Over residues L94 to S161 the composition is skewed to basic and acidic residues. The span at A163–A176 shows a compositional bias: low complexity. 2 stretches are compositionally biased toward basic and acidic residues: residues P196–R219 and R245–S265. The tr-type G domain maps to P347 to E515. Positions G356 to T363 are G1. Residue G356–T363 coordinates GTP. Residues G381 to H385 form a G2 region. The interval D403 to G406 is G3. Residues D403–H407 and T457–D460 contribute to the GTP site. A G4 region spans residues T457–D460. The segment at S493 to K495 is G5.

Belongs to the TRAFAC class translation factor GTPase superfamily. Classic translation factor GTPase family. IF-2 subfamily.

Its subcellular location is the cytoplasm. In terms of biological role, one of the essential components for the initiation of protein synthesis. Protects formylmethionyl-tRNA from spontaneous hydrolysis and promotes its binding to the 30S ribosomal subunits. Also involved in the hydrolysis of GTP during the formation of the 70S ribosomal complex. In Hyphomonas neptunium (strain ATCC 15444), this protein is Translation initiation factor IF-2.